Consider the following 479-residue polypeptide: G-rich sequence factor 1 (479 aa).

A mitochondrion-targeting transit peptide spans 1-116; that stretch reads MAGTRWVLGA…AAAAGPARGY (116 aa). RRM domains are found at residues 149 to 245 and 249 to 325; these read YLIR…PSPV and GVVR…PSRR. Ser243 is modified (phosphoserine). The residue at position 334 (Ser334) is a Phosphoserine. Residues 400-479 enclose the RRM 3 domain; sequence HFVHMRGLPF…LFLNSCPKGK (80 aa).

As to quaternary structure, monomer. Found in a complex with DDX28, DHX30, FASTKD2 and FASTKD5. Interacts with the mitochondrial RNase P complex subunit TRMT10C/MRPP1. Interacts with the 2 components of the mitochondrial degradosome complex, PNPT1 and SUPV3L1, in an RNA-dependent manner.

Its subcellular location is the mitochondrion matrix. Regulator of post-transcriptional mitochondrial gene expression, required for assembly of the mitochondrial ribosome and for recruitment of mRNA and lncRNA. Binds RNAs containing the 14 base G-rich element. Preferentially binds RNAs transcribed from three contiguous genes on the light strand of mtDNA, the ND6 mRNA, and the long non-coding RNAs for MT-CYB and MT-ND5, each of which contains multiple consensus binding sequences. Involved in the degradosome-mediated decay of non-coding mitochondrial transcripts (MT-ncRNA) and tRNA-like molecules. Acts by unwinding G-quadruplex RNA structures in MT-ncRNA, thus facilitating their degradation by the degradosome. G-quadruplexes (G4) are non-canonical 4 stranded structures formed by transcripts from the light strand of mtDNA. In Mus musculus (Mouse), this protein is G-rich sequence factor 1 (Grsf1).